Consider the following 346-residue polypeptide: Envelope glycoprotein M (346 aa).

Residues 1–12 (MALSRVDVINMR) are Intravirion-facing. A helical membrane pass occupies residues 13 to 33 (IWVLSIICACLTYVNVTVHLV). Residues 34 to 76 (AVHFPNLGFPCAYYEINDMKAINLSIRNDIRSLTPQLYLNPIQ) lie on the Virion surface side of the membrane. The chain crosses the membrane as a helical span at residues 77–97 (LICYVVFMDICFFFILVYYIV). The Intravirion segment spans residues 98–117 (CCVKVFSSEKTPNINQSTRD). The helical transmembrane segment at 118-140 (ITWMGDSLSCFQFVLTMDTYQFF) threads the bilayer. Over 141 to 147 (VTCLSFR) the chain is Virion surface. Residues 148-168 (LVTLAAFTYCLFFICFTAFTL) traverse the membrane as a helical segment. Residues 169 to 199 (TMITQYQSSERSFFVLKRIHPKLKGTIKYKT) are Intravirion-facing. Residues 200-220 (IIINMIELMLGFSSMVFAITI) traverse the membrane as a helical segment. The Virion surface segment spans residues 221–236 (CLGLGNNFYIKSSTVA). The helical transmembrane segment at 237-257 (FASINTFFVMSFVYSLVIELI) threads the bilayer. At 258 to 263 (LHQYVK) the chain is on the intravirion side. The helical transmembrane segment at 264-284 (VQFGLHFGILFGILGLTYPIL) threads the bilayer. The Virion surface portion of the chain corresponds to 285 to 293 (KYDSLFKTE). A helical membrane pass occupies residues 294–314 (WTVKFIVNLAVITIVCLSFII). Over 315 to 346 (CRLIRFFMRKHHNYKKLPTTVEDLDVLEEANE) the chain is Intravirion.

The protein belongs to the herpesviridae glycoprotein M family. In terms of assembly, interacts (via N-terminus) with gN (via N-terminus). The gM-gN heterodimer forms the gCII complex.

It localises to the virion membrane. The protein localises to the host Golgi apparatus. The protein resides in the host trans-Golgi network. It is found in the host endosome membrane. Its subcellular location is the host nucleus inner membrane. Functionally, envelope glycoprotein important for virion assembly and egress. Plays a role in the correct incorporation of gH-gL into virion membrane. Directs the glycoprotein N (gN) to the host trans-Golgi network. The polypeptide is Envelope glycoprotein M (Homo sapiens (Human)).